The following is a 415-amino-acid chain: [Pyruvate dehydrogenase (acetyl-transferring)] kinase isozyme 3, mitochondrial (415 aa).

One can recognise a Histidine kinase domain in the interval isoleucine 131–serine 362. Glutamate 247–arginine 254 is a binding site for ATP. Lysine 278 is subject to N6-succinyllysine. ATP is bound by residues aspartate 287, serine 306 to threonine 307, and glycine 323 to leucine 328. The disordered stretch occupies residues threonine 383–phenylalanine 415. The segment covering glutamate 395–phenylalanine 415 has biased composition (basic and acidic residues).

The protein belongs to the PDK/BCKDK protein kinase family. In terms of assembly, homodimer. Interacts with the pyruvate dehydrogenase complex subunit DLAT, and is part of the multimeric pyruvate dehydrogenase complex that contains multiple copies of pyruvate dehydrogenase (E1), dihydrolipoamide acetyltransferase (DLAT, E2) and lipoamide dehydrogenase (DLD, E3).

The protein resides in the mitochondrion matrix. The enzyme catalyses L-seryl-[pyruvate dehydrogenase E1 alpha subunit] + ATP = O-phospho-L-seryl-[pyruvate dehydrogenase E1 alpha subunit] + ADP + H(+). In terms of biological role, inhibits pyruvate dehydrogenase activity by phosphorylation of the E1 subunit PDHA1, and thereby regulates glucose metabolism and aerobic respiration. Can also phosphorylate PDHA2. Decreases glucose utilization and increases fat metabolism in response to prolonged fasting, and as adaptation to a high-fat diet. Plays a role in glucose homeostasis and in maintaining normal blood glucose levels in function of nutrient levels and under starvation. Plays a role in the generation of reactive oxygen species. This is [Pyruvate dehydrogenase (acetyl-transferring)] kinase isozyme 3, mitochondrial (Pdk3) from Mus musculus (Mouse).